The sequence spans 450 residues: Involucrin (450 aa).

Residues 1 to 19 (MSQQHTLPVTLPPTLSQEL) are compositionally biased toward polar residues. Disordered stretches follow at residues 1 to 43 (MSQQ…LPAP), 77 to 370 (QLQQ…EQLK), and 422 to 450 (PGQVQDIQPPQPPKGEVLLPAEQQQEPEV). Basic and acidic residues predominate over residues 86–108 (QEVHLAKHQELQELQEQELHLGK). Residues 120-135 (GKQQQQQESQEQELYL) are compositionally biased toward low complexity. Composition is skewed to basic and acidic residues over residues 187–200 (LGKRLEPQEQELHL) and 264–281 (QELHLGKRLEPQEQELHL). The segment covering 295–344 (GEAAAAGVTGAGPAASKAARRATGAGTAPGKAAAAAGATGAGTAATAPAT) has biased composition (low complexity). Over residues 345-370 (AEERQKAESLEQQLEQEKAQREEQLK) the composition is skewed to basic and acidic residues.

It belongs to the involucrin family. Directly or indirectly cross-linked to cornifelin (CNFN). Post-translationally, substrate of transglutaminase. Specific glutamines or lysines are cross-linked to keratins, desmoplakin and to inter involucrin molecules. Keratinocytes of epidermis and other stratified squamous epithelia.

Its subcellular location is the cytoplasm. Functionally, part of the insoluble cornified cell envelope (CE) of stratified squamous epithelia. This chain is Involucrin (IVL), found in Lemur catta (Ring-tailed lemur).